The chain runs to 304 residues: Small glutamine-rich tetratricopeptide repeat-containing protein beta (304 aa).

TPR repeat units lie at residues 15-49 (LREQ…SPED), 85-118 (ADQL…DPNN), 119-152 (AVYY…DSKY), and 153-186 (SKAY…DPEN). N6-acetyllysine is present on Lys131. A phosphoserine mark is found at Ser293, Ser295, and Ser297.

Belongs to the SGT family. Homooligomerize.

Co-chaperone that binds directly to HSC70 and HSP70 and regulates their ATPase activity. The protein is Small glutamine-rich tetratricopeptide repeat-containing protein beta (SGTB) of Homo sapiens (Human).